The sequence spans 381 residues: Class E basic helix-loop-helix protein 22 (381 aa).

Disordered regions lie at residues 30-94, 135-154, and 188-242; these read RLEA…GGGG, RGSV…DSDG, and HLHG…EQKA. Over residues 82–94 the composition is skewed to gly residues; that stretch reads GGGGGSAGSGGGG. A compositionally biased stretch (gly residues) spans 198 to 225; sequence GGLGGGGGGGSSSGSSGGGGGSGSGSGG. In terms of domain architecture, bHLH spans 242 to 296; the sequence is ALRLNINARERRRMHDLNDALDELRAVIPYAHSPSVRKLSKIATLLLAKNYILMQ.

In terms of assembly, interacts with PRDM8. As to expression, brain-specific, with the highest expression in the cerebellum.

The protein localises to the nucleus. Its function is as follows. Inhibits DNA binding of TCF3/E47 homodimers and TCF3 (E47)/NEUROD1 heterodimers and acts as a strong repressor of Neurod1 and Myod-responsive genes, probably by heterodimerization with class a basic helix-loop-helix factors. Despite the presence of an intact basic domain, does not bind to DNA. In the brain, may function as an area-specific transcription factor that regulates the postmitotic acquisition of area identities and elucidate the genetic hierarchy between progenitors and postmitotic neurons driving neocortical arealization. May be required for the survival of a specific population of inhibitory neurons in the superficial laminae of the spinal cord dorsal horn that may regulate pruritis. Seems to play a crucial role in the retinogenesis, in the specification of amacrine and bipolar subtypes. Forms with PRDM8 a transcriptional repressor complex controlling genes involved in neural development and neuronal differentiation. The polypeptide is Class E basic helix-loop-helix protein 22 (BHLHE22) (Homo sapiens (Human)).